The primary structure comprises 185 residues: MIAAGDFRKGVTIEVDGQIFTVVDFMHVKPGKGAAFVRTKLKNIMTGAVIERTFSPTEKFEEAQIERREMQYLYNDGEFYYFMDTETYEQIPLSYDKVEEAMKYIKENMIVTVKFYKGEAFSVEPPTFVELEVIDTEPGVRGDTVTGGSKPATVETGAVIQVPLFINVGDKIKIDTRTGEYIERV.

Belongs to the elongation factor P family.

Its subcellular location is the cytoplasm. It functions in the pathway protein biosynthesis; polypeptide chain elongation. Functionally, involved in peptide bond synthesis. Stimulates efficient translation and peptide-bond synthesis on native or reconstituted 70S ribosomes in vitro. Probably functions indirectly by altering the affinity of the ribosome for aminoacyl-tRNA, thus increasing their reactivity as acceptors for peptidyl transferase. In Caldanaerobacter subterraneus subsp. tengcongensis (strain DSM 15242 / JCM 11007 / NBRC 100824 / MB4) (Thermoanaerobacter tengcongensis), this protein is Elongation factor P.